The chain runs to 216 residues: Peptide methionine sulfoxide reductase MsrA (216 aa).

Cysteine 54 is a catalytic residue.

It belongs to the MsrA Met sulfoxide reductase family.

The catalysed reaction is L-methionyl-[protein] + [thioredoxin]-disulfide + H2O = L-methionyl-(S)-S-oxide-[protein] + [thioredoxin]-dithiol. It carries out the reaction [thioredoxin]-disulfide + L-methionine + H2O = L-methionine (S)-S-oxide + [thioredoxin]-dithiol. Its function is as follows. Has an important function as a repair enzyme for proteins that have been inactivated by oxidation. Catalyzes the reversible oxidation-reduction of methionine sulfoxide in proteins to methionine. This Xylella fastidiosa (strain Temecula1 / ATCC 700964) protein is Peptide methionine sulfoxide reductase MsrA.